The sequence spans 515 residues: Tabersonine 6,7-epoxidase isoform 2 (515 aa).

A helical transmembrane segment spans residues 1–21 (MEFVVSPFAFLIFFFILLKMI). N-linked (GlcNAc...) asparagine glycosylation is found at Asn-173, Asn-259, and Asn-352. Cys-449 contacts heme.

Belongs to the cytochrome P450 family. Heme serves as cofactor. As to expression, mainly expressed in aerial organs, including stems, leaves and flowers.

The protein resides in the endoplasmic reticulum membrane. The catalysed reaction is (-)-tabersonine + reduced [NADPH--hemoprotein reductase] + O2 = lochnericine + oxidized [NADPH--hemoprotein reductase] + H2O + H(+). The protein operates within alkaloid biosynthesis. Functionally, component of the monoterpenoid indole alkaloids (MIAs, e.g. echitovenine, tabersonine, lochnericine, 19-hydroxytabersonine and horhammericine) biosynthetic pathway; MIAs are used in cancer treatment and other medical applications. Cytochrome P450 catalyzing the conversion of tabersonine to lochnericine. This is Tabersonine 6,7-epoxidase isoform 2 from Catharanthus roseus (Madagascar periwinkle).